We begin with the raw amino-acid sequence, 199 residues long: Dephospho-CoA kinase (199 aa).

The DPCK domain occupies 3–199 (VIGLTGSIGM…AAAKMPRRRS (197 aa)). 11 to 16 (GMGKST) contributes to the ATP binding site.

It belongs to the CoaE family.

Its subcellular location is the cytoplasm. It catalyses the reaction 3'-dephospho-CoA + ATP = ADP + CoA + H(+). The protein operates within cofactor biosynthesis; coenzyme A biosynthesis; CoA from (R)-pantothenate: step 5/5. Functionally, catalyzes the phosphorylation of the 3'-hydroxyl group of dephosphocoenzyme A to form coenzyme A. In Nitrobacter winogradskyi (strain ATCC 25391 / DSM 10237 / CIP 104748 / NCIMB 11846 / Nb-255), this protein is Dephospho-CoA kinase.